Here is a 248-residue protein sequence, read N- to C-terminus: Cell division protein FtsQ (248 aa).

At M1 to R4 the chain is on the cytoplasmic side. A helical transmembrane segment spans residues L5–L25. Residues R26 to R248 lie on the Periplasmic side of the membrane. The region spanning L32–Y101 is the POTRA domain.

It belongs to the FtsQ/DivIB family. FtsQ subfamily. As to quaternary structure, part of a complex composed of FtsB, FtsL and FtsQ.

It is found in the cell inner membrane. Its function is as follows. Essential cell division protein. May link together the upstream cell division proteins, which are predominantly cytoplasmic, with the downstream cell division proteins, which are predominantly periplasmic. May control correct divisome assembly. This chain is Cell division protein FtsQ, found in Allochromatium vinosum (strain ATCC 17899 / DSM 180 / NBRC 103801 / NCIMB 10441 / D) (Chromatium vinosum).